A 153-amino-acid polypeptide reads, in one-letter code: Deoxyuridine 5'-triphosphate nucleotidohydrolase (153 aa).

Substrate contacts are provided by residues 71-73 (RSG), Asn84, 88-90 (TID), and Lys98.

It belongs to the dUTPase family. Mg(2+) serves as cofactor.

The catalysed reaction is dUTP + H2O = dUMP + diphosphate + H(+). The protein operates within pyrimidine metabolism; dUMP biosynthesis; dUMP from dCTP (dUTP route): step 2/2. In terms of biological role, this enzyme is involved in nucleotide metabolism: it produces dUMP, the immediate precursor of thymidine nucleotides and it decreases the intracellular concentration of dUTP so that uracil cannot be incorporated into DNA. This Ehrlichia canis (strain Jake) protein is Deoxyuridine 5'-triphosphate nucleotidohydrolase.